We begin with the raw amino-acid sequence, 152 residues long: UPF0225 protein YchJ (152 aa).

The protein belongs to the UPF0225 family.

In Shigella boydii serotype 18 (strain CDC 3083-94 / BS512), this protein is UPF0225 protein YchJ.